The primary structure comprises 780 residues: ATP-dependent 6-phosphofructokinase, muscle type (780 aa).

N-acetylthreonine is present on T2. The interval T2–H390 is N-terminal catalytic PFK domain 1. ATP-binding positions include G25, R88–C89, and G118–S121. D119 is a binding site for Mg(2+). S133 carries the post-translational modification Phosphoserine. Substrate is bound by residues S164–D166, R201, M208–R210, E264, R292, and H298–R301. Residue D166 is the Proton acceptor of the active site. S377 bears the Phosphoserine mark. Positions V391–H401 are interdomain linker. The tract at residues T402 to V780 is C-terminal regulatory PFK domain 2. Residues R471 and T528 to N532 each bind beta-D-fructose 2,6-bisphosphate. S530 carries an O-linked (GlcNAc) serine glycan. The residue at position 557 (K557) is an N6-(2-hydroxyisobutyryl)lysine. Beta-D-fructose 2,6-bisphosphate-binding positions include R566, M573–G575, E629, R655, and H661–Q664. S667 is modified (phosphoserine). R735 is a beta-D-fructose 2,6-bisphosphate binding site. S775 is subject to Phosphoserine.

This sequence belongs to the phosphofructokinase type A (PFKA) family. ATP-dependent PFK group I subfamily. Eukaryotic two domain clade 'E' sub-subfamily. In terms of assembly, homo- and heterotetramers. Phosphofructokinase (PFK) enzyme functions as a tetramer composed of different combinations of 3 types of subunits, called PFKM (M), PFKL (L) and PFKP (P). The composition of the PFK tetramer differs according to the tissue type it is present in. The kinetic and regulatory properties of the tetrameric enzyme are dependent on the subunit composition, hence can vary across tissues. Interacts (via C-terminus) with HK1 (via N-terminal spermatogenic cell-specific region). Mg(2+) serves as cofactor. Post-translationally, glcNAcylation decreases enzyme activity.

It localises to the cytoplasm. It carries out the reaction beta-D-fructose 6-phosphate + ATP = beta-D-fructose 1,6-bisphosphate + ADP + H(+). It functions in the pathway carbohydrate degradation; glycolysis; D-glyceraldehyde 3-phosphate and glycerone phosphate from D-glucose: step 3/4. With respect to regulation, allosterically activated by ADP, AMP, or fructose 2,6-bisphosphate, and allosterically inhibited by ATP or citrate. In terms of biological role, catalyzes the phosphorylation of D-fructose 6-phosphate to fructose 1,6-bisphosphate by ATP, the first committing step of glycolysis. The sequence is that of ATP-dependent 6-phosphofructokinase, muscle type (PFKM) from Macaca fascicularis (Crab-eating macaque).